An 84-amino-acid chain; its full sequence is Sec-independent protein translocase protein TatA (84 aa).

Residues 1 to 21 form a helical membrane-spanning segment; it reads MGGLQPWHWLIVIAVFVLLFG. A disordered region spans residues 46 to 84; it reads MQSDSNAAKSDQPEQITSERVVVDPSTQSTSSNSDKRPA. Residues 48–63 show a composition bias toward polar residues; it reads SDSNAAKSDQPEQITS.

It belongs to the TatA/E family. In terms of assembly, the Tat system comprises two distinct complexes: a TatABC complex, containing multiple copies of TatA, TatB and TatC subunits, and a separate TatA complex, containing only TatA subunits. Substrates initially bind to the TatABC complex, which probably triggers association of the separate TatA complex to form the active translocon.

Its subcellular location is the cell membrane. In terms of biological role, part of the twin-arginine translocation (Tat) system that transports large folded proteins containing a characteristic twin-arginine motif in their signal peptide across membranes. TatA could form the protein-conducting channel of the Tat system. This chain is Sec-independent protein translocase protein TatA, found in Mycolicibacterium gilvum (strain PYR-GCK) (Mycobacterium gilvum (strain PYR-GCK)).